The sequence spans 187 residues: MITGLALSRVAFGLTAFLLLAVVSSQEKCSNTCIAQNCNSLGIRYGKYCGIGYFGCPGEPPCDDLDACCMTHDNCVDLKGMTYVNCHKQFKRCVNKLSKSIKHSNGEKIGFSTQCPYSIVIPTVFNGMDYGIFFSGIGNIFNPPVLGSVPVVEVDLARSKVDTKDGLGTKLGLQTKEGSKVSASLNI.

A signal peptide spans 1-25 (MITGLALSRVAFGLTAFLLLAVVSS). Intrachain disulfides connect C29/C56, C33/C62, C38/C115, C49/C69, C68/C93, and C75/C86. Ca(2+) contacts are provided by Y48, G50, and Y53. H72 is an active-site residue. D73 provides a ligand contact to Ca(2+).

This sequence belongs to the phospholipase A2 family. It depends on Ca(2+) as a cofactor. Strongly expressed in mature flowers but weakly expressed in other tissues. Detected in buds, open flowers and in pollen.

The protein localises to the secreted. It localises to the golgi apparatus. The protein resides in the trans-Golgi network. It is found in the endoplasmic reticulum. The catalysed reaction is a 1,2-diacyl-sn-glycero-3-phosphocholine + H2O = a 1-acyl-sn-glycero-3-phosphocholine + a fatty acid + H(+). In terms of biological role, PA2 catalyzes the calcium-dependent hydrolysis of the 2-acyl groups in 3-sn-phosphoglycerides. Releases lysophospholipids (LPLs) and free fatty acids (FFAs) from membrane phospholipids in response to hormones and other external stimuli. Plays a role in pollen development and germination and tube growth. This is Phospholipase A2-gamma (PLA2-GAMMA) from Arabidopsis thaliana (Mouse-ear cress).